A 282-amino-acid chain; its full sequence is Aspergillopepsin-2 (282 aa).

The N-terminal stretch at 1 to 18 (MKFSTILTGSLFATAALA) is a signal peptide. Propeptides lie at residues 19 to 59 (APLT…GTTN) and 99 to 109 (GGGYGYWKNKR). Residues 27–39 (ARKEARAAGKRHS) are compositionally biased toward basic residues. Residues 27 to 46 (ARKEARAAGKRHSNPPYIPG) are disordered. Q110 carries the post-translational modification Pyrrolidone carboxylic acid. 2 disulfides stabilise this stretch: C115–C139 and C127–C210.

The protein belongs to the peptidase G1 family. Heterodimer of two noncovalently bound light and heavy chains.

The enzyme catalyses Preferential cleavage in B chain of insulin: 3-Asn-|-Gln-4, 13-Gly-|-Ala-14, and 26-Tyr-|-Thr-27.. This Aspergillus niger protein is Aspergillopepsin-2.